We begin with the raw amino-acid sequence, 376 residues long: Chaperone protein DnaJ (376 aa).

Residues 5-70 form the J domain; it reads DYYEVLGVGR…DKKAAYDQFG (66 aa). The CR-type zinc finger occupies 132–210; it reads GLTKELRIPT…CHGDGRVEKS (79 aa). Positions 145, 148, 162, 165, 184, 187, 198, and 201 each coordinate Zn(2+). CXXCXGXG motif repeat units lie at residues 145–152, 162–169, 184–191, and 198–205; these read CDLCDGSG, CTTCHGQG, CPTCHGRG, and CSKCHGDG.

This sequence belongs to the DnaJ family. In terms of assembly, homodimer. It depends on Zn(2+) as a cofactor.

Its subcellular location is the cytoplasm. Its function is as follows. Participates actively in the response to hyperosmotic and heat shock by preventing the aggregation of stress-denatured proteins and by disaggregating proteins, also in an autonomous, DnaK-independent fashion. Unfolded proteins bind initially to DnaJ; upon interaction with the DnaJ-bound protein, DnaK hydrolyzes its bound ATP, resulting in the formation of a stable complex. GrpE releases ADP from DnaK; ATP binding to DnaK triggers the release of the substrate protein, thus completing the reaction cycle. Several rounds of ATP-dependent interactions between DnaJ, DnaK and GrpE are required for fully efficient folding. Also involved, together with DnaK and GrpE, in the DNA replication of plasmids through activation of initiation proteins. The protein is Chaperone protein DnaJ of Shewanella sp. (strain W3-18-1).